A 112-amino-acid polypeptide reads, in one-letter code: Colipase (112 aa).

Positions 1 to 17 (MEKVLILLLVALAVAYA) are cleaved as a signal peptide. Residues 18-22 (VPDPR) constitute a propeptide, enterostatin, activation peptide. Intrachain disulfides connect Cys34-Cys45, Cys40-Cys56, Cys44-Cys78, Cys66-Cys86, and Cys80-Cys104.

It belongs to the colipase family. As to quaternary structure, forms a 1:1 stoichiometric complex with pancreatic lipase.

The protein localises to the secreted. Functionally, colipase is a cofactor of pancreatic lipase. It allows the lipase to anchor itself to the lipid-water interface. Without colipase the enzyme is washed off by bile salts, which have an inhibitory effect on the lipase. In terms of biological role, enterostatin has a biological activity as a satiety signal. This chain is Colipase (CLPS), found in Bos taurus (Bovine).